A 308-amino-acid chain; its full sequence is Ribosomal RNA small subunit methyltransferase H (308 aa).

S-adenosyl-L-methionine contacts are provided by residues 36–38 (GGH), aspartate 55, phenylalanine 86, aspartate 103, and glutamine 110.

The protein belongs to the methyltransferase superfamily. RsmH family.

The protein localises to the cytoplasm. It catalyses the reaction cytidine(1402) in 16S rRNA + S-adenosyl-L-methionine = N(4)-methylcytidine(1402) in 16S rRNA + S-adenosyl-L-homocysteine + H(+). Functionally, specifically methylates the N4 position of cytidine in position 1402 (C1402) of 16S rRNA. The protein is Ribosomal RNA small subunit methyltransferase H of Helicobacter pylori (strain P12).